The following is a 146-amino-acid chain: Oxygen-independent coproporphyrinogen III oxidase (146 aa).

Residue Y54 coordinates S-adenosyl-L-methionine. Residues C60 and C64 each contribute to the [4Fe-4S] cluster site. F66 contributes to the S-adenosyl-L-methionine binding site. C67 contributes to the [4Fe-4S] cluster binding site. S-adenosyl-L-methionine-binding positions include 111–112 (GT) and E143.

It belongs to the anaerobic coproporphyrinogen-III oxidase family. As to quaternary structure, monomer. [4Fe-4S] cluster serves as cofactor.

The protein localises to the cytoplasm. It catalyses the reaction coproporphyrinogen III + 2 S-adenosyl-L-methionine = protoporphyrinogen IX + 2 5'-deoxyadenosine + 2 L-methionine + 2 CO2. Its pathway is porphyrin-containing compound metabolism; protoporphyrin-IX biosynthesis; protoporphyrinogen-IX from coproporphyrinogen-III (AdoMet route): step 1/1. In terms of biological role, involved in the heme biosynthesis. Catalyzes the anaerobic oxidative decarboxylation of propionate groups of rings A and B of coproporphyrinogen III to yield the vinyl groups in protoporphyrinogen IX. In Mannheimia haemolytica (Pasteurella haemolytica), this protein is Oxygen-independent coproporphyrinogen III oxidase (hemN).